We begin with the raw amino-acid sequence, 319 residues long: Putative antiporter CaxA (319 aa).

10 helical membrane passes run 3–23, 38–58, 81–101, 105–125, 127–147, 175–195, 208–228, 250–270, 275–292, and 297–317; these read VATI…DRFV, MIIG…MVSA, ILLV…SMTI, FPLL…QSLT, AEGA…VYWG, VWLV…VHGA, LIGL…ASLI, ILAV…AAAA, YVMM…LRLG, and INRV…YLLF.

The protein belongs to the Ca(2+):cation antiporter (CaCA) (TC 2.A.19) family.

It localises to the cell membrane. Functionally, confers modest Ca(2+) and Na(+) resistance. The polypeptide is Putative antiporter CaxA (caxA) (Alkalimonas amylolytica).